The following is a 211-amino-acid chain: Claudin-7 (211 aa).

The Cytoplasmic portion of the chain corresponds to 1 to 7 (MANSGLQ). The chain crosses the membrane as a helical span at residues 8–28 (LLGFSMAMLGWVGLIASTAIP). The Extracellular portion of the chain corresponds to 29 to 81 (QWQMSSYAGDNIITAQAMYKGLWMECVTQSTGMMSCKMYDSVLALPGALQATR). The helical transmembrane segment at 82-102 (ALMVVSLVLGFLAMFVATMGM) threads the bilayer. Residues 103 to 119 (KCTRCGGDDKAKKARIA) are Cytoplasmic-facing. A helical membrane pass occupies residues 120 to 140 (MTGGIVFIVAGLAALVACSWI). Residues 141–160 (GHQIVTDFYNPLTPMNVKYE) are Extracellular-facing. Residues 161 to 181 (FGPAIFIGWAGSALVLLGGAL) form a helical membrane-spanning segment. Residues 182 to 211 (LSCSCPGSESKAAYRAPRSYPKSNSSKEYV) lie on the Cytoplasmic side of the membrane. The interactions with TJP1, TJP2 and TJP3 stretch occupies residues 210–211 (YV).

It belongs to the claudin family. As to quaternary structure, directly interacts with TJP1/ZO-1, TJP2/ZO-2 and TJP3/ZO-3. The phosphorylated form interacts with EPCAM. Post-translationally, phosphorylated. Expressed predominantly in lung and kidney.

It localises to the cell membrane. It is found in the basolateral cell membrane. Its subcellular location is the cell junction. The protein resides in the tight junction. Functionally, plays a major role in tight junction-specific obliteration of the intercellular space, through calcium-independent cell-adhesion activity. This Mus musculus (Mouse) protein is Claudin-7 (Cldn7).